We begin with the raw amino-acid sequence, 557 residues long: UvrABC system protein C (557 aa).

The GIY-YIG domain maps to 14–89 (EEPGVYIFKN…IKKYRPKYNV (76 aa)). Residues 194 to 229 (EEVFDYLKEKMETHSKMLDFENAAKYRDLLLNLSNV) enclose the UVR domain.

It belongs to the UvrC family. Interacts with UvrB in an incision complex.

It localises to the cytoplasm. Functionally, the UvrABC repair system catalyzes the recognition and processing of DNA lesions. UvrC both incises the 5' and 3' sides of the lesion. The N-terminal half is responsible for the 3' incision and the C-terminal half is responsible for the 5' incision. The sequence is that of UvrABC system protein C from Thermotoga sp. (strain RQ2).